Reading from the N-terminus, the 318-residue chain is Aspartate carbamoyltransferase catalytic subunit (318 aa).

2 residues coordinate carbamoyl phosphate: R59 and T60. K87 provides a ligand contact to L-aspartate. 3 residues coordinate carbamoyl phosphate: R109, H137, and Q140. 2 residues coordinate L-aspartate: R170 and R224. The carbamoyl phosphate site is built by G265 and P266.

It belongs to the aspartate/ornithine carbamoyltransferase superfamily. ATCase family. As to quaternary structure, heterododecamer (2C3:3R2) of six catalytic PyrB chains organized as two trimers (C3), and six regulatory PyrI chains organized as three dimers (R2).

It carries out the reaction carbamoyl phosphate + L-aspartate = N-carbamoyl-L-aspartate + phosphate + H(+). The protein operates within pyrimidine metabolism; UMP biosynthesis via de novo pathway; (S)-dihydroorotate from bicarbonate: step 2/3. Its function is as follows. Catalyzes the condensation of carbamoyl phosphate and aspartate to form carbamoyl aspartate and inorganic phosphate, the committed step in the de novo pyrimidine nucleotide biosynthesis pathway. This Allorhizobium ampelinum (strain ATCC BAA-846 / DSM 112012 / S4) (Agrobacterium vitis (strain S4)) protein is Aspartate carbamoyltransferase catalytic subunit.